Here is a 382-residue protein sequence, read N- to C-terminus: Chaperone protein DnaJ (382 aa).

The J domain maps to 5-70 (DYYEVLGVSR…DKKAAYDRYG (66 aa)). The CR-type zinc-finger motif lies at 141 to 219 (GVQKTINVPA…CHGAGRVEKE (79 aa)). Residues Cys154, Cys157, Cys171, Cys174, Cys193, Cys196, Cys207, and Cys210 each coordinate Zn(2+). CXXCXGXG motif repeat units lie at residues 154–161 (CDACKGTG), 171–178 (CPTCSGMG), 193–200 (CPTCNGMG), and 207–214 (CKVCHGAG).

The protein belongs to the DnaJ family. As to quaternary structure, homodimer. Requires Zn(2+) as cofactor.

It is found in the cytoplasm. Participates actively in the response to hyperosmotic and heat shock by preventing the aggregation of stress-denatured proteins and by disaggregating proteins, also in an autonomous, DnaK-independent fashion. Unfolded proteins bind initially to DnaJ; upon interaction with the DnaJ-bound protein, DnaK hydrolyzes its bound ATP, resulting in the formation of a stable complex. GrpE releases ADP from DnaK; ATP binding to DnaK triggers the release of the substrate protein, thus completing the reaction cycle. Several rounds of ATP-dependent interactions between DnaJ, DnaK and GrpE are required for fully efficient folding. Also involved, together with DnaK and GrpE, in the DNA replication of plasmids through activation of initiation proteins. The sequence is that of Chaperone protein DnaJ from Cereibacter sphaeroides (strain ATCC 17023 / DSM 158 / JCM 6121 / CCUG 31486 / LMG 2827 / NBRC 12203 / NCIMB 8253 / ATH 2.4.1.) (Rhodobacter sphaeroides).